A 525-amino-acid chain; its full sequence is Glutamyl-tRNA(Gln) amidotransferase subunit A, mitochondrial (525 aa).

Catalysis depends on charge relay system residues Lys76 and Ser168. The Acyl-ester intermediate role is filled by Ser192.

The protein belongs to the amidase family. GatA subfamily. Subunit of the heterotrimeric GatCAB amidotransferase (AdT) complex, composed of A (QRSL1), B (GATB) and C (GATC) subunits.

It is found in the mitochondrion. It carries out the reaction L-glutamyl-tRNA(Gln) + L-glutamine + ATP + H2O = L-glutaminyl-tRNA(Gln) + L-glutamate + ADP + phosphate + H(+). Its function is as follows. Allows the formation of correctly charged Gln-tRNA(Gln) through the transamidation of misacylated Glu-tRNA(Gln) in the mitochondria. The reaction takes place in the presence of glutamine and ATP through an activated gamma-phospho-Glu-tRNA(Gln). The polypeptide is Glutamyl-tRNA(Gln) amidotransferase subunit A, mitochondrial (Qrsl1) (Mus musculus (Mouse)).